The following is an 88-amino-acid chain: NADH-ubiquinone oxidoreductase chain 4L (88 aa).

The next 3 helical transmembrane spans lie at 1 to 21, 22 to 42, and 55 to 75; these read MNLS…NRKN, IILM…LVLM, and FSIY…SILV.

Belongs to the complex I subunit 4L family.

It is found in the mitochondrion membrane. It carries out the reaction a ubiquinone + NADH + 5 H(+)(in) = a ubiquinol + NAD(+) + 4 H(+)(out). Functionally, core subunit of the mitochondrial membrane respiratory chain NADH dehydrogenase (Complex I) that is believed to belong to the minimal assembly required for catalysis. Complex I functions in the transfer of electrons from NADH to the respiratory chain. The immediate electron acceptor for the enzyme is believed to be ubiquinone. In Schizophyllum commune (Split gill fungus), this protein is NADH-ubiquinone oxidoreductase chain 4L (ND4L).